The chain runs to 368 residues: Glutamate 5-kinase (368 aa).

K9 is a binding site for ATP. 3 residues coordinate substrate: S49, D136, and N148. ATP is bound by residues 168–169 and 210–216; these read TD and TGGMMTK. Residues 275 to 353 enclose the PUA domain; it reads AGIITIDNGA…ADIENVLGYE (79 aa).

This sequence belongs to the glutamate 5-kinase family.

The protein resides in the cytoplasm. The enzyme catalyses L-glutamate + ATP = L-glutamyl 5-phosphate + ADP. It functions in the pathway amino-acid biosynthesis; L-proline biosynthesis; L-glutamate 5-semialdehyde from L-glutamate: step 1/2. Catalyzes the transfer of a phosphate group to glutamate to form L-glutamate 5-phosphate. The chain is Glutamate 5-kinase from Haemophilus influenzae (strain ATCC 51907 / DSM 11121 / KW20 / Rd).